Consider the following 149-residue polypeptide: 3-dehydroquinate dehydratase (149 aa).

The active-site Proton acceptor is Tyr24. Substrate contacts are provided by Asn75, His81, and Asp88. The active-site Proton donor is the His101. Substrate is bound by residues 102–103 and Arg112; that span reads IS.

Belongs to the type-II 3-dehydroquinase family. Homododecamer.

It carries out the reaction 3-dehydroquinate = 3-dehydroshikimate + H2O. It functions in the pathway metabolic intermediate biosynthesis; chorismate biosynthesis; chorismate from D-erythrose 4-phosphate and phosphoenolpyruvate: step 3/7. In terms of biological role, catalyzes a trans-dehydration via an enolate intermediate. The sequence is that of 3-dehydroquinate dehydratase from Methylobacterium radiotolerans (strain ATCC 27329 / DSM 1819 / JCM 2831 / NBRC 15690 / NCIMB 10815 / 0-1).